A 475-amino-acid chain; its full sequence is Glycogen synthase (475 aa).

Lys15 lines the ADP-alpha-D-glucose pocket.

It belongs to the glycosyltransferase 1 family. Bacterial/plant glycogen synthase subfamily.

The catalysed reaction is [(1-&gt;4)-alpha-D-glucosyl](n) + ADP-alpha-D-glucose = [(1-&gt;4)-alpha-D-glucosyl](n+1) + ADP + H(+). Its pathway is glycan biosynthesis; glycogen biosynthesis. In terms of biological role, synthesizes alpha-1,4-glucan chains using ADP-glucose. This is Glycogen synthase from Chlamydia caviae (strain ATCC VR-813 / DSM 19441 / 03DC25 / GPIC) (Chlamydophila caviae).